Reading from the N-terminus, the 147-residue chain is UPF0735 ACT domain-containing protein ABC1543 (147 aa).

An ACT domain is found at 70-145 (TFSINLADRS…SVERVELVGS (76 aa)).

Belongs to the UPF0735 family.

The sequence is that of UPF0735 ACT domain-containing protein ABC1543 from Shouchella clausii (strain KSM-K16) (Alkalihalobacillus clausii).